A 299-amino-acid chain; its full sequence is ATP phosphoribosyltransferase (299 aa).

It belongs to the ATP phosphoribosyltransferase family. Long subfamily. Requires Mg(2+) as cofactor.

It is found in the cytoplasm. The enzyme catalyses 1-(5-phospho-beta-D-ribosyl)-ATP + diphosphate = 5-phospho-alpha-D-ribose 1-diphosphate + ATP. It participates in amino-acid biosynthesis; L-histidine biosynthesis; L-histidine from 5-phospho-alpha-D-ribose 1-diphosphate: step 1/9. Feedback inhibited by histidine. Catalyzes the condensation of ATP and 5-phosphoribose 1-diphosphate to form N'-(5'-phosphoribosyl)-ATP (PR-ATP). Has a crucial role in the pathway because the rate of histidine biosynthesis seems to be controlled primarily by regulation of HisG enzymatic activity. The chain is ATP phosphoribosyltransferase from Campylobacter jejuni subsp. jejuni serotype O:2 (strain ATCC 700819 / NCTC 11168).